The sequence spans 690 residues: Translation initiation factor IF-2 (690 aa).

Positions 178 to 346 constitute a tr-type G domain; the sequence is PRPPVVTVMG…MILLVAEMNE (169 aa). The interval 187–194 is G1; that stretch reads GHVDHGKT. 187-194 contacts GTP; that stretch reads GHVDHGKT. Residues 212-216 form a G2 region; it reads GITQS. Residues 233–236 are G3; sequence DTPG. Residues 233–237 and 287–290 contribute to the GTP site; these read DTPGH and NKID. The interval 287 to 290 is G4; sequence NKID. The interval 324–326 is G5; the sequence is SAR.

The protein belongs to the TRAFAC class translation factor GTPase superfamily. Classic translation factor GTPase family. IF-2 subfamily.

Its subcellular location is the cytoplasm. Functionally, one of the essential components for the initiation of protein synthesis. Protects formylmethionyl-tRNA from spontaneous hydrolysis and promotes its binding to the 30S ribosomal subunits. Also involved in the hydrolysis of GTP during the formation of the 70S ribosomal complex. The chain is Translation initiation factor IF-2 from Thermotoga sp. (strain RQ2).